The chain runs to 477 residues: D-alanyl-D-alanine carboxypeptidase DacB (477 aa).

The N-terminal stretch at 1–20 (MRFSRFIIGLTSCIAFSVQA) is a signal peptide. Ser-62 (acyl-ester intermediate) is an active-site residue. Lys-65 functions as the Proton acceptor in the catalytic mechanism. The segment at 90–263 (GNVENGVLKG…YAGAILKDEL (174 aa)) is absent in class-A beta-lactamases. Residue Ser-306 is part of the active site. Lys-417 contributes to the substrate binding site.

It belongs to the peptidase S13 family.

The protein resides in the periplasm. It catalyses the reaction Preferential cleavage: (Ac)2-L-Lys-D-Ala-|-D-Ala. Also transpeptidation of peptidyl-alanyl moieties that are N-acyl substituents of D-alanine.. Its pathway is cell wall biogenesis; peptidoglycan biosynthesis. Its function is as follows. Not involved in transpeptidation but exclusively catalyzes a DD-carboxypeptidase and DD-endopeptidase reaction. The chain is D-alanyl-D-alanine carboxypeptidase DacB (dacB) from Escherichia coli (strain K12).